The following is a 1191-amino-acid chain: uncharacterized protein (1191 aa).

WD repeat units lie at residues 558–588 (GHRDGVTSVAISSHKNLIASASRDGTVHLWT), 599–629 (GHTGSIYRVDFSPNGKIFATAGQDQTVKIWD), 640–670 (GHQDSVYSVSFSPDGEILASTSRDRTVRLWH), 682–712 (GHTKSVDDAQFSPDGQTLVSVCRDGQIRLWD), 723–753 (LPEVAFFGVNWHPNGNLLAVAADDGTVRLWT), 764–794 (GHDEFVTRVVFTPDGKQLFSSSSNGSVIHWS), 805–835 (GYPEAIFGLALASNGALLAIGAENNLVKVWD), 995–1025 (QRKEPIRSVSLHPTLPQLAAGDEQGNLTLWN), 1036–1066 (AHGDRLNQLQYSPNGKYLLSAGREGTAKIWS), 1077–1107 (SDPLPIDQIAISPDSQWIATAASDGMVRLWD), and 1118–1148 (STSGSLLGLDFNRQGQWLLAVAQNGDLQSWP).

This is an uncharacterized protein from Synechocystis sp. (strain ATCC 27184 / PCC 6803 / Kazusa).